Here is a 176-residue protein sequence, read N- to C-terminus: Oxaleimides biosynthesis cluster protein N (176 aa).

4 consecutive transmembrane segments (helical) span residues 5–25, 71–91, 104–124, and 155–175; these read LLVV…PLIT, VWTG…LNLF, FLYG…PKML, and FWIV…EGLK.

The protein localises to the membrane. It functions in the pathway secondary metabolite biosynthesis. Part of the gene cluster that mediates the biosynthesis of oxaleimides, cytotoxic compounds containing an unusual disubstituted succinimide moiety. The first step of the pathway is provided by the HR-PKS poxF that serves in a new mode of collaborative biosynthesis with the PKS-NRPS poxE, by providing the olefin containing amino acid substrate via the synthesis of an ACP-bound dec-4-enoate. The cytochrome P450 monooxygenase poxM-catalyzed oxidation at the alpha-position creates the enzyme-bound 2-hydroxydec-4-enoyl-ACP thioester, which may be prone to spontaneous hydrolysis to yield 2-hydroxydec-4-enoic acid due to increased electrophilicity of the carbonyl. 2-hydroxydec-4-enoic acid can then be further oxidized by poxM to yield the alpha-ketoacid 2-oxodec-4-enoicacid, which is reductively aminated by the aminotransferase poxL to yield (S,E)-2-aminodec-4-enoic acid. The Hybrid PKS-NRPS synthetase poxE then performs condensation between the octaketide product of its PKS modules and the amino group of (S,E)-2-aminodec-4-enoic acid which is activated and incorporated by the adenylation domain. The resulting aminoacyl product can be cyclized by the Diels-Alderase PoxQ and reductively released by the reductive (R) domain of poxE to yield an aldehyde intermediate. The released aldehyde is then substrate for a Knoevenagel condensation by the hydrolyase poxO followed by an oxidation at the 5-position of the pyrrolidone ring. The presence of the olefin from the amino acid building block allows for migration of the substituted allyl group to occur. This allylic transposition reaction takes place in a conjugate addition, semipinacol-like fashion to yield a succinimide intermediate. Iterative two-electron oxidations of the C7 methyl of the succinimide intermediate to the carboxylic acid can be catalyzed by one of two remaining cytochrome P450 monooxygenasess poxC or poxD to yield oxaleimide A. Subsequent oxidation yields the maleimide scaffold oxaleimide I. Both oxaleimide A and oxaleimide I can undergo oxidative modifications in the decalin ring to yield the series of products oxaleimides B to H. This chain is Oxaleimides biosynthesis cluster protein N, found in Penicillium oxalicum (strain 114-2 / CGMCC 5302) (Penicillium decumbens).